Consider the following 686-residue polypeptide: Methionine--tRNA ligase (686 aa).

A 'HIGH' region motif is present at residues 15-25 (PYANGSIHLGH). Positions 146, 149, 159, and 162 each coordinate Zn(2+). Residues 332 to 336 (KMSKS) carry the 'KMSKS' region motif. K335 is a binding site for ATP. Residues 585 to 686 (AFAAVDMRIA…EGAQPGMRVM (102 aa)) enclose the tRNA-binding domain.

This sequence belongs to the class-I aminoacyl-tRNA synthetase family. MetG type 1 subfamily. In terms of assembly, homodimer. It depends on Zn(2+) as a cofactor.

The protein resides in the cytoplasm. It catalyses the reaction tRNA(Met) + L-methionine + ATP = L-methionyl-tRNA(Met) + AMP + diphosphate. Its function is as follows. Is required not only for elongation of protein synthesis but also for the initiation of all mRNA translation through initiator tRNA(fMet) aminoacylation. The sequence is that of Methionine--tRNA ligase from Vibrio campbellii (strain ATCC BAA-1116).